We begin with the raw amino-acid sequence, 338 residues long: DNA-directed RNA polymerase subunit alpha (338 aa).

The tract at residues 1-225 is alpha N-terminal domain (alpha-NTD); sequence MLISQRPTIT…ELFGLARELN (225 aa). The tract at residues 242–338 is alpha C-terminal domain (alpha-CTD); the sequence is YIAAYSMPIE…YIDVEAEDSE (97 aa). Positions 319–338 are disordered; the sequence is LEGYDAETGGYIDVEAEDSE.

Belongs to the RNA polymerase alpha chain family. In terms of assembly, homodimer. The RNAP catalytic core consists of 2 alpha, 1 beta, 1 beta' and 1 omega subunit. When a sigma factor is associated with the core the holoenzyme is formed, which can initiate transcription.

It carries out the reaction RNA(n) + a ribonucleoside 5'-triphosphate = RNA(n+1) + diphosphate. Its function is as follows. DNA-dependent RNA polymerase catalyzes the transcription of DNA into RNA using the four ribonucleoside triphosphates as substrates. The chain is DNA-directed RNA polymerase subunit alpha from Corynebacterium glutamicum (strain ATCC 13032 / DSM 20300 / JCM 1318 / BCRC 11384 / CCUG 27702 / LMG 3730 / NBRC 12168 / NCIMB 10025 / NRRL B-2784 / 534).